Reading from the N-terminus, the 423-residue chain is Glucose-1-phosphate adenylyltransferase (423 aa).

Alpha-D-glucose 1-phosphate contacts are provided by residues Tyr-112, Gly-177, 192 to 193 (EK), and Ser-210.

This sequence belongs to the bacterial/plant glucose-1-phosphate adenylyltransferase family. In terms of assembly, homotetramer.

The enzyme catalyses alpha-D-glucose 1-phosphate + ATP + H(+) = ADP-alpha-D-glucose + diphosphate. The protein operates within glycan biosynthesis; glycogen biosynthesis. Involved in the biosynthesis of ADP-glucose, a building block required for the elongation reactions to produce glycogen. Catalyzes the reaction between ATP and alpha-D-glucose 1-phosphate (G1P) to produce pyrophosphate and ADP-Glc. The chain is Glucose-1-phosphate adenylyltransferase from Rhodospirillum rubrum (strain ATCC 11170 / ATH 1.1.1 / DSM 467 / LMG 4362 / NCIMB 8255 / S1).